We begin with the raw amino-acid sequence, 45 residues long: Putative UPF0377 protein YJL222W-B (45 aa).

Belongs to the UPF0377 family.

The sequence is that of Putative UPF0377 protein YJL222W-B from Saccharomyces cerevisiae (strain ATCC 204508 / S288c) (Baker's yeast).